The chain runs to 505 residues: Trans-cinnamate 4-monooxygenase (505 aa).

A helical membrane pass occupies residues 3–23 (LLLLEKSLIAVFVAVILATVI). (E)-cinnamate is bound by residues 213-218 (RSRLAQ) and Ala306. Cys447 lines the heme pocket.

Belongs to the cytochrome P450 family. Requires heme as cofactor. Expressed in roots, leaves, stems, flowers and siliques.

It localises to the membrane. It catalyses the reaction (E)-cinnamate + reduced [NADPH--hemoprotein reductase] + O2 = (E)-4-coumarate + oxidized [NADPH--hemoprotein reductase] + H2O + H(+). It participates in phenylpropanoid metabolism; trans-4-coumarate biosynthesis; trans-4-coumarate from trans-cinnamate: step 1/1. In terms of biological role, catalyzes the first oxidative step of the phenylpropanoid pathway in higher plants by transforming trans-cinnamate into p-coumarate. The compounds formed by this pathway are essential components for lignification, pollination, and defense against ultraviolet light, predators and pathogens. The chain is Trans-cinnamate 4-monooxygenase from Arabidopsis thaliana (Mouse-ear cress).